The primary structure comprises 319 residues: Acetyl esterase (319 aa).

An Involved in the stabilization of the negatively charged intermediate by the formation of the oxyanion hole motif is present at residues 91 to 93; that stretch reads HGG. Active-site residues include Ser-165, Asp-262, and His-292.

This sequence belongs to the 'GDXG' lipolytic enzyme family. Homodimer. Interacts with MalT and MelA.

The protein localises to the cytoplasm. Its function is as follows. Displays esterase activity towards short chain fatty esters (acyl chain length of up to 8 carbons). Able to hydrolyze triacetylglycerol (triacetin) and tributyrylglycerol (tributyrin), but not trioleylglycerol (triolein) or cholesterol oleate. Negatively regulates MalT activity by antagonizing maltotriose binding. Inhibits MelA galactosidase activity. The protein is Acetyl esterase of Escherichia coli (strain 55989 / EAEC).